The primary structure comprises 296 residues: Ceramide synthase LOH2 (296 aa).

6 helical membrane-spanning segments follow: residues 19–39, 80–100, 121–141, 158–178, 206–226, and 254–274; these read VWHF…RLVL, LLYY…EPWA, LYYM…LAWE, IILL…IILA, FALF…FWII, and MLLM…AMIV. The TLC domain maps to 71-278; it reads VKCKESLWKL…ICAMIVRLLK (208 aa). A phosphoserine mark is found at Ser-289 and Ser-291.

Expressed ubiquitously with highest levels in pollen.

It is found in the endoplasmic reticulum membrane. The enzyme catalyses a sphingoid base + hexadecanoyl-CoA = an N-hexadecanoyl-sphingoid base + CoA + H(+). The catalysed reaction is sphinganine + hexadecanoyl-CoA = N-hexadecanoylsphinganine + CoA + H(+). It catalyses the reaction sphing-4-enine + hexadecanoyl-CoA = N-hexadecanoylsphing-4-enine + CoA + H(+). It carries out the reaction sphinga-(4E,8E)-dienine + hexadecanoyl-CoA = N-hexadecanoylsphinga-(4E,8E)-dienine + CoA + H(+). The enzyme catalyses sphinga-(4E,8Z)-dienine + hexadecanoyl-CoA = N-hexadecanoylsphinga-(4E,8Z)-dienine + CoA + H(+). Its pathway is sphingolipid metabolism. Inhibited by the mycotoxin fumonisin B(1), a sphingosine analog mycotoxins produced by pathogenic fungi. Activated by divalent cation such as magnesium Mg(2+), zinc Zn(2+), manganese Mn(2+) and calcium Ca(2+). Functionally, prevents cell division in root meristems and promotes salicylic acid (SA) production and hypersensitive response (HR). Catalyzes the biosynthesis of ceramide sphingolipids with C(16) fatty acids, structural membrane lipids involved in membrane trafficking (e.g. early endosomes) and cell polarity (e.g. polar auxin transport related proteins); accepts only C16:0 fatty acids, but with a wide range of d18 sphingoid bases, such as sphinganine (d18:0) and palmitoyl-CoA. Mediates resistance to sphinganine-analog mycotoxins (SAMs, e.g. fumonisin B(1)) by restoring the sphingolipid biosynthesis. Could salvage the transport of GPI-anchored proteins from the endoplasmic reticulum to the Golgi apparatus in ceramides-depleted cells after SAM exposure. Contributes to hypoxic conditions tolerance (e.g. submergences), especially in the dark, by promoting the formation of very-long-chain (VLC) ceramide species (22:1, 24:1 and 26:1) and of VLC unsaturated ceramides, which are modulating CTR1-mediated ethylene signaling leading to endoplasmic reticulum (ER)-to-nucleus translocation of EIN2 and EIN3. The sequence is that of Ceramide synthase LOH2 from Arabidopsis thaliana (Mouse-ear cress).